The chain runs to 315 residues: uncharacterized protein (315 aa).

The segment covering 296-308 (RSKLRKGTHKRTP) has biased composition (basic residues). The disordered stretch occupies residues 296-315 (RSKLRKGTHKRTPGRAGDAD).

It belongs to the metallo-dependent hydrolases superfamily. Peptidase M19 family.

This is an uncharacterized protein from Acinetobacter calcoaceticus.